The primary structure comprises 99 residues: Duplicate procyclin (99 aa).

The protein is Duplicate procyclin of Trypanosoma brucei brucei.